The sequence spans 225 residues: Uracil-DNA glycosylase (225 aa).

Catalysis depends on D65, which acts as the Proton acceptor.

The protein belongs to the uracil-DNA glycosylase (UDG) superfamily. UNG family.

Its subcellular location is the cytoplasm. It carries out the reaction Hydrolyzes single-stranded DNA or mismatched double-stranded DNA and polynucleotides, releasing free uracil.. Its function is as follows. Excises uracil residues from the DNA which can arise as a result of misincorporation of dUMP residues by DNA polymerase or due to deamination of cytosine. This is Uracil-DNA glycosylase from Bacillus cereus (strain AH187).